Reading from the N-terminus, the 274-residue chain is Large ribosomal subunit protein uL2 (274 aa).

The segment at 224-274 (VAMNPVDHPHGGGEGRTSGGRHPVTPWGIPTKGYKTRRNKRSNKLIVQKRK) is disordered. Basic residues predominate over residues 257-274 (YKTRRNKRSNKLIVQKRK).

The protein belongs to the universal ribosomal protein uL2 family. Part of the 50S ribosomal subunit. Forms a bridge to the 30S subunit in the 70S ribosome.

In terms of biological role, one of the primary rRNA binding proteins. Required for association of the 30S and 50S subunits to form the 70S ribosome, for tRNA binding and peptide bond formation. It has been suggested to have peptidyltransferase activity; this is somewhat controversial. Makes several contacts with the 16S rRNA in the 70S ribosome. The protein is Large ribosomal subunit protein uL2 of Francisella tularensis subsp. mediasiatica (strain FSC147).